The primary structure comprises 315 residues: Probable cell division protein WhiA (315 aa).

A DNA-binding region (H-T-H motif) is located at residues 280–313; sequence SLKELGQMLDPQVGKSGINHRLRKIEKIAEELRT.

Belongs to the WhiA family.

In terms of biological role, involved in cell division and chromosome segregation. The protein is Probable cell division protein WhiA of Clostridium botulinum (strain Alaska E43 / Type E3).